A 354-amino-acid chain; its full sequence is Uroporphyrinogen decarboxylase (354 aa).

Substrate contacts are provided by residues 27–31 (RQAGR), phenylalanine 46, aspartate 77, tyrosine 154, threonine 209, and histidine 327.

This sequence belongs to the uroporphyrinogen decarboxylase family. In terms of assembly, homodimer.

It is found in the cytoplasm. The enzyme catalyses uroporphyrinogen III + 4 H(+) = coproporphyrinogen III + 4 CO2. It functions in the pathway porphyrin-containing compound metabolism; protoporphyrin-IX biosynthesis; coproporphyrinogen-III from 5-aminolevulinate: step 4/4. Functionally, catalyzes the decarboxylation of four acetate groups of uroporphyrinogen-III to yield coproporphyrinogen-III. This Escherichia coli O157:H7 protein is Uroporphyrinogen decarboxylase.